A 459-amino-acid chain; its full sequence is Cysteine--tRNA ligase (459 aa).

Cysteine 28 contributes to the Zn(2+) binding site. Residues 30 to 40 (VTVYDLCHIGH) carry the 'HIGH' region motif. Residues cysteine 209, histidine 234, and glutamate 238 each coordinate Zn(2+). Residues 266–270 (KMSKS) carry the 'KMSKS' region motif. Lysine 269 contacts ATP.

This sequence belongs to the class-I aminoacyl-tRNA synthetase family. In terms of assembly, monomer. Zn(2+) is required as a cofactor.

It localises to the cytoplasm. It carries out the reaction tRNA(Cys) + L-cysteine + ATP = L-cysteinyl-tRNA(Cys) + AMP + diphosphate. This chain is Cysteine--tRNA ligase, found in Histophilus somni (strain 2336) (Haemophilus somnus).